The chain runs to 732 residues: Elongation factor 2 (732 aa).

The tr-type G domain occupies 19-260; that stretch reads ERIRNMGIAA…MVVKHLPNPL (242 aa). GTP contacts are provided by residues 28 to 35, 94 to 98, and 148 to 151; these read AHIDHGKT, DTPGH, and NKVD. The residue at position 597 (His597) is a Diphthamide.

The protein belongs to the TRAFAC class translation factor GTPase superfamily. Classic translation factor GTPase family. EF-G/EF-2 subfamily.

The protein localises to the cytoplasm. In terms of biological role, catalyzes the GTP-dependent ribosomal translocation step during translation elongation. During this step, the ribosome changes from the pre-translocational (PRE) to the post-translocational (POST) state as the newly formed A-site-bound peptidyl-tRNA and P-site-bound deacylated tRNA move to the P and E sites, respectively. Catalyzes the coordinated movement of the two tRNA molecules, the mRNA and conformational changes in the ribosome. The sequence is that of Elongation factor 2 from Thermococcus kodakarensis (strain ATCC BAA-918 / JCM 12380 / KOD1) (Pyrococcus kodakaraensis (strain KOD1)).